Reading from the N-terminus, the 92-residue chain is MARSIKKGPFIEKSLYQKVLASSGREKRVVIKTYSRASTIIPEMVSLTISVYNGKSFIPVYITEDLVGHKLGEFSPTRIFRGHAKSDKKGRK.

The protein belongs to the universal ribosomal protein uS19 family.

Functionally, protein S19 forms a complex with S13 that binds strongly to the 16S ribosomal RNA. This chain is Small ribosomal subunit protein uS19, found in Borrelia hermsii (strain HS1 / DAH).